We begin with the raw amino-acid sequence, 273 residues long: GTP cyclohydrolase MptA (273 aa).

The protein belongs to the GTP cyclohydrolase IV family. Homodimer. It depends on Fe(2+) as a cofactor.

The enzyme catalyses GTP + H2O = 7,8-dihydroneopterin 2',3'-cyclic phosphate + formate + diphosphate + H(+). Its pathway is cofactor biosynthesis; 5,6,7,8-tetrahydromethanopterin biosynthesis. Its function is as follows. Converts GTP to 7,8-dihydro-D-neopterin 2',3'-cyclic phosphate, the first intermediate in the biosynthesis of coenzyme methanopterin. The polypeptide is GTP cyclohydrolase MptA (Picrophilus torridus (strain ATCC 700027 / DSM 9790 / JCM 10055 / NBRC 100828 / KAW 2/3)).